A 933-amino-acid chain; its full sequence is Phosphoenolpyruvate carboxylase (933 aa).

Active-site residues include histidine 164 and lysine 595.

This sequence belongs to the PEPCase type 1 family. Mg(2+) serves as cofactor.

The catalysed reaction is oxaloacetate + phosphate = phosphoenolpyruvate + hydrogencarbonate. Functionally, forms oxaloacetate, a four-carbon dicarboxylic acid source for the tricarboxylic acid cycle. The sequence is that of Phosphoenolpyruvate carboxylase from Rhodopseudomonas palustris (strain HaA2).